The sequence spans 199 residues: Fe/S biogenesis protein NfuA (199 aa).

The [4Fe-4S] cluster site is built by C151 and C154.

Belongs to the NfuA family. In terms of assembly, homodimer. Requires [4Fe-4S] cluster as cofactor.

Involved in iron-sulfur cluster biogenesis. Binds a 4Fe-4S cluster, can transfer this cluster to apoproteins, and thereby intervenes in the maturation of Fe/S proteins. Could also act as a scaffold/chaperone for damaged Fe/S proteins. This is Fe/S biogenesis protein NfuA from Stenotrophomonas maltophilia (strain R551-3).